Here is a 595-residue protein sequence, read N- to C-terminus: Estrogen receptor (595 aa).

A modulating (transactivation AF-1); mediates interaction with MACROD1 region spans residues 1–184 (MTMTLHTKAS…AMESAKETRY (184 aa)). An O-linked (GlcNAc) serine glycan is attached at Ser-10. Residues 35 to 47 (LERPLGEVYVDSS) are required for interaction with NCOA1. An interaction with DDX5; self-association region spans residues 35 to 174 (LERPLGEVYV…LASTSDKGSM (140 aa)). 2 positions are modified to phosphoserine; by CDK2: Ser-104 and Ser-106. Phosphoserine is present on Ser-118. The tract at residues 144-174 (AGPPAFYRPNSDNRRQGGRERLASTSDKGSM) is disordered. The span at 154-165 (SDNRRQGGRERL) shows a compositional bias: basic and acidic residues. Ser-167 is subject to Phosphoserine; by CK2. NR C4-type zinc fingers lie at residues 185–205 (CAVC…CEGC) and 221–245 (CPAT…LRKC). A DNA-binding region (nuclear receptor) is located at residues 185 to 250 (CAVCNDYASG…RLRKCYEVGM (66 aa)). The segment at 185 to 310 (CAVCNDYASG…TKKNSPVLSL (126 aa)) is mediates interaction with DNTTIP2. The hinge stretch occupies residues 251 to 310 (MKGGIRKDRRGGRMLKHKRQRDDGEGRNEAVPPGDMRSANLWPSPLLIKHTKKNSPVLSL). Over residues 257-269 (KDRRGGRMLKHKR) the composition is skewed to basic residues. The interval 257–288 (KDRRGGRMLKHKRQRDDGEGRNEAVPPGDMRS) is disordered. Arg-260 carries the post-translational modification Asymmetric dimethylarginine; by PRMT1. The interaction with AKAP13 stretch occupies residues 262 to 595 (GRMLKHKRQR…GEAENFPTTI (334 aa)). The tract at residues 264–594 (MLKHKRQRDD…TGEAENFPTT (331 aa)) is self-association. Residues 311–547 (TADQMISALL…DLLLEMLDAH (237 aa)) form the NR LBD domain. Residues 311–594 (TADQMISALL…TGEAENFPTT (284 aa)) are transactivation AF-2. Positions 353 and 394 each coordinate 17beta-estradiol. A lipid anchor (S-palmitoyl cysteine) is attached at Cys-447. His-524 contacts 17beta-estradiol. The residue at position 537 (Tyr-537) is a Phosphotyrosine; by Tyr-kinases. A disordered region spans residues 551 to 575 (APTNLGGPPPEDMSQSQLATSGSTP). Over residues 563–575 (MSQSQLATSGSTP) the composition is skewed to polar residues.

Belongs to the nuclear hormone receptor family. NR3 subfamily. In terms of assembly, binds DNA as a homodimer. Can form a heterodimer with ESR2. Interacts with coactivator NCOA5. Interacts with PELP1, the interaction is enhanced by 17-beta-estradiol; the interaction increases ESR1 transcriptional activity. Interacts with NCOA7; the interaction is ligand-inducible. Interacts with AKAP13, CUEDC2, HEXIM1, KDM5A, MAP1S, SMARD1, and UBE1C. Interacts with MUC1; the interaction is stimulated by 7 beta-estradiol (E2) and enhances ESR1-mediated transcription. Interacts with DNTTIP2, and UIMC1. Interacts with KMT2D/MLL2. Interacts with ATAD2; the interaction is enhanced by estradiol. Interacts with KIF18A and LDB1. Interacts with RLIM (via its C-terminus). Interacts with MACROD1. Interacts with SH2D4A and PLCG. Interacts with SH2D4A; the interaction blocks binding to PLCG and inhibits estrogen-induced cell proliferation. Interacts with DYNLL1. Interacts with CCDC62; the interaction requires estradiol and appears to enhance the transcription of target genes. Interacts with NR2C1; the interaction prevents homodimerization of ESR1 and suppresses its transcriptional activity and cell growth. Interacts with DNAAF4. Interacts with PRMT2. Interacts with RBFOX2. Interacts with EP300; the interaction is estrogen-dependent and enhanced by CITED1. Interacts with CITED1; the interaction is estrogen-dependent. Interacts with FAM120B, FOXL2, PHB2 and SLC30A9. Interacts with coactivators NCOA3 and NCOA6. Interacts with STK3/MST2 only in the presence of SAV1 and vice-versa. Binds to CSNK1D. Interacts with NCOA2; NCOA2 can interact with ESR1 AF-1 and AF-2 domains simultaneously and mediate their transcriptional synergy. Interacts with DDX5. Interacts with NCOA1; the interaction seems to require a self-association of N-terminal and C-terminal regions. Interacts with ZNF366, DDX17, NFKB1, RELA, SP1 and SP3. Interacts with NRIP1. Interacts with GPER1; the interaction occurs in an estrogen-dependent manner. Interacts with CLOCK and the interaction is stimulated by estrogen. Interacts with TRIP4 (ufmylated); estrogen dependent. Interacts with LMTK3; the interaction phosphorylates ESR1 (in vitro) and protects it against proteasomal degradation. Interacts with CCAR2 (via N-terminus) in a ligand-independent manner. Interacts with ZFHX3. Interacts with SFR1 in a ligand-dependent and -independent manner. Interacts with DCAF13, LATS1 and DCAF1; regulates ESR1 ubiquitination and ubiquitin-mediated proteasomal degradation. Interacts (via DNA-binding domain) with POU4F2 (C-terminus); this interaction increases the estrogen receptor ESR1 transcriptional activity in a DNA- and ligand 17-beta-estradiol-independent manner. Interacts with ESRRB isoform 1. Interacts with UBE3A and WBP2. Interacts with GTF2B. Interacts with RBM39. In the absence of hormonal ligand, interacts with TACC1. Interacts with PI3KR1 or PI3KR2 and PTK2/FAK1. Interacts with SRC. Interacts with BAG1; the interaction is promoted in the absence of estradiol (17-beta-estradiol/E2). Interacts with and ubiquitinated by STUB1; the interaction is promoted in the absence of estradiol (17-beta-estradiol/E2). Interacts with NEDD8. Phosphorylated by cyclin A/CDK2 and CK1. Phosphorylation probably enhances transcriptional activity. Dephosphorylation at Ser-118 by PPP5C inhibits its transactivation activity. Phosphorylated by LMTK3 (in vitro). In terms of processing, ubiquitinated; regulated by LATS1 via DCAF1 it leads to ESR1 proteasomal degradation. Deubiquitinated by OTUB1. Ubiquitinated by STUB1/CHIP; in the CA1 hippocampal region following loss of endogenous circulating estradiol (17-beta-estradiol/E2). Ubiquitinated by UBR5, leading to its degradation: UBR5 specifically recognizes and binds ligand-bound ESR1 when it is not associated with coactivators (NCOAs). In presence of NCOAs, the UBR5-degron is not accessible, preventing its ubiquitination and degradation. Post-translationally, palmitoylated at Cys-447 by ZDHHC7 and ZDHHC21. Palmitoylation is required for plasma membrane targeting and for rapid intracellular signaling via ERK and AKT kinases and cAMP generation, but not for signaling mediated by the nuclear hormone receptor. Dimethylated by PRMT1 at Arg-260. The methylation may favor cytoplasmic localization. Demethylated by JMJD6 at Arg-260.

The protein resides in the nucleus. Its subcellular location is the cytoplasm. The protein localises to the golgi apparatus. It is found in the cell membrane. Nuclear hormone receptor. The steroid hormones and their receptors are involved in the regulation of eukaryotic gene expression and affect cellular proliferation and differentiation in target tissues. Ligand-dependent nuclear transactivation involves either direct homodimer binding to a palindromic estrogen response element (ERE) sequence or association with other DNA-binding transcription factors, such as AP-1/c-Jun, c-Fos, ATF-2, Sp1 and Sp3, to mediate ERE-independent signaling. Ligand binding induces a conformational change allowing subsequent or combinatorial association with multiprotein coactivator complexes through LXXLL motifs of their respective components. Mutual transrepression occurs between the estrogen receptor (ER) and NF-kappa-B in a cell-type specific manner. Decreases NF-kappa-B DNA-binding activity and inhibits NF-kappa-B-mediated transcription from the IL6 promoter and displace RELA/p65 and associated coregulators from the promoter. Recruited to the NF-kappa-B response element of the CCL2 and IL8 promoters and can displace CREBBP. Present with NF-kappa-B components RELA/p65 and NFKB1/p50 on ERE sequences. Can also act synergistically with NF-kappa-B to activate transcription involving respective recruitment adjacent response elements; the function involves CREBBP. Can activate the transcriptional activity of TFF1. Also mediates membrane-initiated estrogen signaling involving various kinase cascades. Essential for MTA1-mediated transcriptional regulation of BRCA1 and BCAS3. Maintains neuronal survival in response to ischemic reperfusion injury when in the presence of circulating estradiol (17-beta-estradiol/E2). The chain is Estrogen receptor (ESR1) from Sus scrofa (Pig).